The following is a 588-amino-acid chain: UDP-N-acetylmuramate--L-alanine ligase (588 aa).

119 to 125 is a binding site for ATP; it reads GSHGKST. Residues 344 to 371 are compositionally biased toward low complexity; that stretch reads VPAAAGAAAAPPVRRDPATAAAAATTAP. The tract at residues 344 to 411 is disordered; that stretch reads VPAAAGAAAA…APAAGPDHAA (68 aa). The segment covering 372–381 has biased composition (pro residues); the sequence is IGPPDSPPPT. Positions 382 to 411 are enriched in low complexity; sequence GIALPRAAPPAVDAPVAATPAPAAGPDHAA.

It belongs to the MurCDEF family.

Its subcellular location is the cytoplasm. It carries out the reaction UDP-N-acetyl-alpha-D-muramate + L-alanine + ATP = UDP-N-acetyl-alpha-D-muramoyl-L-alanine + ADP + phosphate + H(+). It participates in cell wall biogenesis; peptidoglycan biosynthesis. Functionally, cell wall formation. The polypeptide is UDP-N-acetylmuramate--L-alanine ligase (Frankia alni (strain DSM 45986 / CECT 9034 / ACN14a)).